Here is a 161-residue protein sequence, read N- to C-terminus: Allophycocyanin beta chain (161 aa).

Asn71 is subject to N4-methylasparagine. Cys81 is a binding site for (2R,3E)-phycocyanobilin.

This sequence belongs to the phycobiliprotein family. Heterodimer of an alpha and a beta chain. In terms of processing, contains one covalently linked phycocyanobilin chromophore.

It localises to the cellular thylakoid membrane. Light-harvesting photosynthetic bile pigment-protein from the phycobiliprotein complex. Allophycocyanin has a maximum absorption at approximately 650 nanometers. This chain is Allophycocyanin beta chain (apcB), found in Anabaena variabilis.